The sequence spans 648 residues: Cell surface glycoprotein MUC18 (648 aa).

Residues 1–23 form the signal peptide; that stretch reads MGLPKLVCVFLFAACCCCRRAAG. 2 consecutive Ig-like V-type domains span residues 24–131 and 141–244; these read VPGE…HYVE and PTIQ…KEVT. Over 24–563 the chain is Extracellular; the sequence is VPGEEKQPVP…LPQPESKGVV (540 aa). 5 disulfide bridges follow: Cys-50–Cys-118, Cys-163–Cys-225, Cys-274–Cys-322, Cys-367–Cys-409, and Cys-454–Cys-501. Residue Asn-58 is glycosylated (N-linked (GlcNAc...) asparagine). Ig-like C2-type domains lie at 246-332, 337-426, and 432-512; these read PVFY…TTIT, PLEL…QLVS, and SPWM…SNTT. Positions 281 to 304 are disordered; sequence QPHFTINKKDPSTGEMEEESTDEN. N-linked (GlcNAc...) asparagine glycosylation occurs at Asn-510. Polar residues predominate over residues 532-549; it reads TGLSTLTVSPHTRANSTS. The interval 532–554 is disordered; that stretch reads TGLSTLTVSPHTRANSTSTEKKL. A helical membrane pass occupies residues 564–584; it reads IVAVIVCTLVLAVLGAALYFF. Over 585-648 the chain is Cytoplasmic; it reads YKKGKLPCGR…QGEKYIDLRH (64 aa). Phosphoserine is present on residues Ser-608 and Ser-616. The interval 625–648 is disordered; sequence LLQGSNGDKRAPGDQGEKYIDLRH. Over residues 631-648 the composition is skewed to basic and acidic residues; sequence GDKRAPGDQGEKYIDLRH.

In terms of tissue distribution, detected in melanoma cell lines.

The protein resides in the membrane. Plays a role in cell adhesion, and in cohesion of the endothelial monolayer at intercellular junctions in vascular tissue. Its expression may allow melanoma cells to interact with cellular elements of the vascular system, thereby enhancing hematogeneous tumor spread. Could be an adhesion molecule active in neural crest cells during embryonic development. Acts as a surface receptor that triggers tyrosine phosphorylation of FYN and PTK2/FAK1, and a transient increase in the intracellular calcium concentration. This is Cell surface glycoprotein MUC18 (Mcam) from Mus musculus (Mouse).